We begin with the raw amino-acid sequence, 614 residues long: Male-specific lethal 1 homolog (614 aa).

Disordered regions lie at residues 1 to 127 (MTMR…GCSP) and 147 to 217 (KEPT…GASS). Residues Ser66 and Ser126 each carry the phosphoserine modification. Positions 158 to 169 (GAASPAATASDP) are enriched in low complexity. Positions 170–184 (AGPPPLPLPGPPPLA) are enriched in pro residues. Over residues 185–194 (PTATAGTLAA) the composition is skewed to low complexity. Position 205 is a phosphoserine (Ser205). The stretch at 213–282 (SGASSQAACL…KDNEKERHKL (70 aa)) forms a coiled coil. The tract at residues 223–237 (KQILLLQLDLIEQQQ) is interaction with MSL2. Basic and acidic residues-rich tracts occupy residues 272–281 (KKDNEKERHK) and 294–304 (TELSEKIKLEC). A disordered region spans residues 272–420 (KKDNEKERHK…PKEKAFSSEI (149 aa)). Lys301 is covalently cross-linked (Glycyl lysine isopeptide (Lys-Gly) (interchain with G-Cter in SUMO2)). Residues 317 to 346 (PKPFSCGRSGKGHKRKSPFGSTERKTPVKK) carry the Nuclear localization signal motif. Lys353 is modified (N6-acetyllysine). Glycyl lysine isopeptide (Lys-Gly) (interchain with G-Cter in SUMO2) cross-links involve residues Lys365 and Lys378. The span at 376 to 392 (VCKRELRSQETPEKPRS) shows a compositional bias: basic and acidic residues. Ser393 carries the phosphoserine modification. Positions 393-407 (SVDTPPRLSTPQKGP) are enriched in polar residues. The residue at position 396 (Thr396) is a Phosphothreonine. A Phosphoserine modification is found at Ser442. Positions 472-591 (VLAVPSWRDH…LTPQNFELPW (120 aa)) constitute a PEHE domain. The interval 496-514 (ENLDDSVFSKRHAKLELDE) is interaction with KAT8 HAT domain. The short motif at 505–519 (KRHAKLELDEKRRKR) is the Bipartite nuclear localization signal element. The interval 550-591 (EVTSFFPEPDDVESLMITPFLPVVAFGRPLPKLTPQNFELPW) is sufficient for interaction with MSL3 MRG domain.

Belongs to the msl-1 family. In terms of assembly, component of a multisubunit histone acetyltransferase complex (MSL) at least composed of the KAT8/MOF/MYST1, MSL1/hampin, MSL2 and MSL3. Forms a MSL heterotetrameric core with MSL2. Interacts (via PEHE domain) with KAT8 (via HAT domain) and MSL3 (via MRG domain); both interactions are direct. Directly interacts with NUPR1. Interacts with TP53BP1; this interaction may be required for MSL1 DNA repair activity, but not for histone acetyltransferase activity. Interacts with TTC4, ECM2 and PIHD1. In terms of processing, sumoylated with SUMO1.

It is found in the nucleus. Its subcellular location is the nucleoplasm. The protein localises to the nucleus speckle. Functionally, non-catalytic component of the MSL histone acetyltransferase complex, a multiprotein complex that mediates the majority of histone H4 acetylation at 'Lys-16' (H4K16ac), an epigenetic mark that prevents chromatin compaction. The MSL complex is required for chromosome stability and genome integrity by maintaining homeostatic levels of H4K16ac. The MSL complex is also involved in gene dosage by promoting up-regulation of genes expressed by the X chromosome. X up-regulation is required to compensate for autosomal biallelic expression. The MSL complex also participates in gene dosage compensation by promoting expression of Tsix non-coding RNA. Within the MSL complex, acts as a scaffold to tether MSL3 and KAT8 together for enzymatic activity regulation. Greatly enhances MSL2 E3 ubiquitin ligase activity, promoting monoubiquitination of histone H2B at 'Lys-34' (H2BK34Ub). This modification in turn stimulates histone H3 methylation at 'Lys-4' (H3K4me) and 'Lys-79' (H3K79me) and leads to gene activation, including that of HOXA9 and MEIS1. In Homo sapiens (Human), this protein is Male-specific lethal 1 homolog.